Here is a 515-residue protein sequence, read N- to C-terminus: 1-pyrroline-5-carboxylate dehydrogenase (515 aa).

Residues Glu286 and Cys320 contribute to the active site.

It belongs to the aldehyde dehydrogenase family. RocA subfamily.

It carries out the reaction L-glutamate 5-semialdehyde + NAD(+) + H2O = L-glutamate + NADH + 2 H(+). The protein operates within amino-acid degradation; L-proline degradation into L-glutamate; L-glutamate from L-proline: step 2/2. The protein is 1-pyrroline-5-carboxylate dehydrogenase of Oceanobacillus iheyensis (strain DSM 14371 / CIP 107618 / JCM 11309 / KCTC 3954 / HTE831).